Here is a 318-residue protein sequence, read N- to C-terminus: DNA-directed RNA polymerase subunit alpha 2 (318 aa).

The alpha N-terminal domain (alpha-NTD) stretch occupies residues 1 to 227 (MALENLLHPT…NQLRNILDIE (227 aa)). The segment at 242-318 (INPILLKHVE…TLIENWPQDL (77 aa)) is alpha C-terminal domain (alpha-CTD).

The protein belongs to the RNA polymerase alpha chain family. As to quaternary structure, homodimer. The RNAP catalytic core consists of 2 alpha, 1 beta, 1 beta' and 1 omega subunit. When a sigma factor is associated with the core the holoenzyme is formed, which can initiate transcription.

It carries out the reaction RNA(n) + a ribonucleoside 5'-triphosphate = RNA(n+1) + diphosphate. DNA-dependent RNA polymerase catalyzes the transcription of DNA into RNA using the four ribonucleoside triphosphates as substrates. The polypeptide is DNA-directed RNA polymerase subunit alpha 2 (Francisella tularensis subsp. tularensis (strain FSC 198)).